The chain runs to 349 residues: Ferredoxin--NADP reductase 1 (349 aa).

7 residues coordinate FAD: E36, K44, Y48, I88, L123, D290, and S331.

It belongs to the ferredoxin--NADP reductase type 2 family. In terms of assembly, homodimer. The cofactor is FAD.

The catalysed reaction is 2 reduced [2Fe-2S]-[ferredoxin] + NADP(+) + H(+) = 2 oxidized [2Fe-2S]-[ferredoxin] + NADPH. This chain is Ferredoxin--NADP reductase 1, found in Bacillus thuringiensis (strain Al Hakam).